A 557-amino-acid polypeptide reads, in one-letter code: 2-succinyl-5-enolpyruvyl-6-hydroxy-3-cyclohexene-1-carboxylate synthase (557 aa).

It belongs to the TPP enzyme family. MenD subfamily. In terms of assembly, homodimer. Mg(2+) is required as a cofactor. It depends on Mn(2+) as a cofactor. Thiamine diphosphate serves as cofactor.

It catalyses the reaction isochorismate + 2-oxoglutarate + H(+) = 5-enolpyruvoyl-6-hydroxy-2-succinyl-cyclohex-3-ene-1-carboxylate + CO2. Its pathway is quinol/quinone metabolism; 1,4-dihydroxy-2-naphthoate biosynthesis; 1,4-dihydroxy-2-naphthoate from chorismate: step 2/7. It functions in the pathway quinol/quinone metabolism; menaquinone biosynthesis. Its function is as follows. Catalyzes the thiamine diphosphate-dependent decarboxylation of 2-oxoglutarate and the subsequent addition of the resulting succinic semialdehyde-thiamine pyrophosphate anion to isochorismate to yield 2-succinyl-5-enolpyruvyl-6-hydroxy-3-cyclohexene-1-carboxylate (SEPHCHC). The protein is 2-succinyl-5-enolpyruvyl-6-hydroxy-3-cyclohexene-1-carboxylate synthase of Staphylococcus aureus (strain MSSA476).